Here is a 351-residue protein sequence, read N- to C-terminus: Probable sugar phosphate/phosphate translocator At5g11230 (351 aa).

The next 10 helical transmembrane spans lie at 15–35, 49–69, 89–109, 113–133, 141–161, 165–185, 205–225, 236–256, 263–283, and 286–306; these read IVLS…VIVY, FPIS…FLII, VVPI…AYIY, SFIQ…GVLF, DTMM…YGEA, VWGV…LVLI, VAPC…FPVL, AIFG…FLLV, TMNV…WSVI, and TVTP…AYYN. Residues 38–156 form the EamA domain; it reads YILDKKMYNW…LSISFGVAIA (119 aa). The interval 321–351 is disordered; the sequence is KKIQQADEESGRLLEEREGDVEGKKNDQSGN.

The protein belongs to the TPT transporter family. TPT (TC 2.A.7.9) subfamily.

The protein resides in the membrane. This Arabidopsis thaliana (Mouse-ear cress) protein is Probable sugar phosphate/phosphate translocator At5g11230.